The following is a 124-amino-acid chain: Fluoride-specific ion channel FluC (124 aa).

4 helical membrane passes run Val-4–Leu-24, Phe-35–Ala-55, Ile-60–Ser-80, and Leu-100–Ile-120. The Na(+) site is built by Gly-74 and Thr-77.

The protein belongs to the fluoride channel Fluc/FEX (TC 1.A.43) family.

It is found in the cell inner membrane. The catalysed reaction is fluoride(in) = fluoride(out). Na(+) is not transported, but it plays an essential structural role and its presence is essential for fluoride channel function. Functionally, fluoride-specific ion channel. Important for reducing fluoride concentration in the cell, thus reducing its toxicity. The sequence is that of Fluoride-specific ion channel FluC from Shewanella amazonensis (strain ATCC BAA-1098 / SB2B).